The following is a 460-amino-acid chain: MAARPNNIGIKAIELYFPSQCVDQAELEKFDGVSAGKYTIGLGQTRMSFCDDREDIYSLTLTTVSSLLRKYNIDPKSIGRLEVGTETLLDKSKSCKTVLMQLFEPCGNTNIEGVDTVNACYGGTNALFNTLNWMESSAWDGRNAIVVAGDIALYKKGNARPTGGAGCVAMLIGPDAPLVIEPGLRGSFVKHAYDFYKADLTSEYPLVDGQYSIKCYTEAVDKCYEAYNGREKTLKSQANGHSNGVDAAQEAPLDRFDYMCFHAPTCKLVSKSYARLLYNDYLADPTNELFKEVPAELKDLSYEASITDKTVEKTFMGLAKKRFAQRVQPSIQVPTMCGNMYCASVYASLVSLISNVSSADFQGKRVGIFSYGSGLASSLFSLKVKGSTEEITKNLNLQERLDARRVVAPEVYDEMCNLREKAHLQKDFKPKGSVDTILPNTYYLTNVDDMFRREYEVKKE.

Position 35 (Ala35) interacts with (3S)-3-hydroxy-3-methylglutaryl-CoA. The active-site Proton donor/acceptor is Glu86. (3S)-3-hydroxy-3-methylglutaryl-CoA is bound by residues Cys120, Asn158, Thr162, Ser212, His262, Lys271, Asn339, and Ser373. Residue Cys120 is the Acyl-thioester intermediate of the active site. His262 acts as the Proton donor/acceptor in catalysis.

It belongs to the thiolase-like superfamily. HMG-CoA synthase family.

The enzyme catalyses acetoacetyl-CoA + acetyl-CoA + H2O = (3S)-3-hydroxy-3-methylglutaryl-CoA + CoA + H(+). It participates in siderophore biosynthesis. Its function is as follows. Hydroxymethylglutaryl-CoA synthase involved in the biosynthesis of a ferrichrome A-like siderophors which may contribute to organismal virulence. The first step of siderophore biosynthesis is performed by the HMG-CoA synthase (HMGS) MYCGRDRAFT_54740 which catalyzes the generation of HMG-CoA and CoA using acetoacetyl-CoA and acetyl-CoA as substrates. The enoyl-CoA isomerase/hydratase MYCGRDRAFT_76805 then catalyzes the conversion of HMG-CoA to methylglutaconyl-CoA. The acyltransferase MYCGRDRAFT_85486 then fuses methylglutaconyl-CoA with hydroxyornithine to yield methylglutaconyl hydroxyornithine. Methylglutaconyl hydroxyornithine is then available for use by the nonribosomal peptide synthetase NRPS2 to generate the ferrichrome A-like siderophore. This is Hydroxymethylglutaryl-CoA synthase MYCGRDRAFT_54740 (ERG13) from Zymoseptoria tritici (strain CBS 115943 / IPO323) (Speckled leaf blotch fungus).